A 114-amino-acid polypeptide reads, in one-letter code: Superoxide dismutase [Cu-Zn] (114 aa).

Positions 37, 39, and 54 each coordinate Cu cation. Zn(2+) is bound by residues His-54, His-62, His-71, and Asp-74. The disordered stretch occupies residues 54–80; sequence HFNPGNKEHGAPTDGNRHLGDLGNIQA. Residues 59-73 are compositionally biased toward basic and acidic residues; it reads NKEHGAPTDGNRHLG. His-111 contacts Cu cation.

It belongs to the Cu-Zn superoxide dismutase family. Homodimer. Cu cation is required as a cofactor. Requires Zn(2+) as cofactor.

It is found in the cytoplasm. It carries out the reaction 2 superoxide + 2 H(+) = H2O2 + O2. Its function is as follows. Destroys radicals which are normally produced within the cells and which are toxic to biological systems. The chain is Superoxide dismutase [Cu-Zn] from Drosophila tolteca (Fruit fly).